We begin with the raw amino-acid sequence, 307 residues long: Mitochondrial glycine transporter (307 aa).

3 Solcar repeats span residues 8 to 87 (PRNS…MRSS), 115 to 199 (LTMY…SKQL), and 221 to 305 (TSTT…LVKR). The next 6 membrane-spanning stretches (helical) occupy residues 14–39 (LIGG…TRIQ), 62–88 (GTLP…RSSL), 121–146 (LLTG…VRYE), 174–197 (GFGA…EKSK), 225–251 (VNTT…KTRM), and 280–298 (GLSM…AWGI).

Belongs to the mitochondrial carrier (TC 2.A.29) family. SLC25A38 subfamily.

The protein resides in the mitochondrion inner membrane. It carries out the reaction glycine(in) = glycine(out). Mitochondrial glycine transporter that imports glycine into the mitochondrial matrix. Plays an important role in providing glycine for the first enzymatic step in heme biosynthesis, the condensation of glycine with succinyl-CoA to produce 5-aminolevulinate (ALA) in the mitochondrial matrix. The sequence is that of Mitochondrial glycine transporter from Saccharomyces cerevisiae (strain RM11-1a) (Baker's yeast).